We begin with the raw amino-acid sequence, 104 residues long: Putative protein 22K (104 aa).

The tract at residues 35-104 (YKQLEKELGE…KAPAAKAPSK (70 aa)) is disordered. Acidic residues predominate over residues 60-78 (PLSEGELEEISEEEEEEGE). Residues 94 to 104 (SKAPAAKAPSK) show a composition bias toward low complexity.

The protein is Putative protein 22K of Snake adenovirus serotype 1 (SnAdV-1).